Here is a 151-residue protein sequence, read N- to C-terminus: Putative pre-16S rRNA nuclease (151 aa).

This sequence belongs to the YqgF nuclease family.

It is found in the cytoplasm. Functionally, could be a nuclease involved in processing of the 5'-end of pre-16S rRNA. This chain is Putative pre-16S rRNA nuclease, found in Paraburkholderia phymatum (strain DSM 17167 / CIP 108236 / LMG 21445 / STM815) (Burkholderia phymatum).